A 379-amino-acid polypeptide reads, in one-letter code: Alcohol dehydrogenase 1 (379 aa).

Residues Cys-47, Thr-49, His-69, Cys-99, Cys-102, Cys-105, Cys-113, and Cys-177 each contribute to the Zn(2+) site. The an alcohol site is built by Thr-49 and His-69. Thr-49 provides a ligand contact to NAD(+). NAD(+) is bound by residues 202-207, Asp-226, Arg-231, Thr-272, Val-295, 295-297, Phe-322, and Arg-372; these read GLGAVG and VGV.

Belongs to the zinc-containing alcohol dehydrogenase family. Homodimer. Zn(2+) serves as cofactor.

It localises to the cytoplasm. The enzyme catalyses a primary alcohol + NAD(+) = an aldehyde + NADH + H(+). The catalysed reaction is a secondary alcohol + NAD(+) = a ketone + NADH + H(+). The sequence is that of Alcohol dehydrogenase 1 (ADH1) from Oryza sativa subsp. indica (Rice).